The primary structure comprises 203 residues: Ponticulin-like protein H (203 aa).

Residues 1–20 (MKLLNSLVLLAALCAITANG) form the signal peptide. N-linked (GlcNAc...) asparagine glycosylation is present at N58. Over residues 127-168 (SDSTNPTSTPSTTPSATPTVTPSTTPTVTPTVTPSTTPTVAP) the composition is skewed to low complexity. The segment at 127-183 (SDSTNPTSTPSTTPSATPTVTPSTTPTVTPTVTPSTTPTVAPTVPPTTPPSTTTGSG) is disordered. S182 is lipidated: GPI-like-anchor amidated serine. Positions 183–203 (GSTVVASFGLIVSILLASLAL) are cleaved as a propeptide — removed in mature form.

It belongs to the ponticulin family. In terms of processing, the GPI-like-anchor contains a phosphoceramide group, rather than a phosphatidyl group.

Its subcellular location is the cell membrane. In terms of biological role, binds F-actin and nucleates actin assembly. This Dictyostelium discoideum (Social amoeba) protein is Ponticulin-like protein H (ponH).